The chain runs to 148 residues: Nucleoside diphosphate kinase (148 aa).

ATP is bound by residues Lys9, Phe57, Arg85, Thr91, Arg102, and Asn112. Thr91 bears the Phosphothreonine mark. The Pros-phosphohistidine intermediate role is filled by His115. Ser122 bears the Phosphoserine mark.

The protein belongs to the NDK family. Homotetramer. The cofactor is Mg(2+).

The protein resides in the cytoplasm. The catalysed reaction is a 2'-deoxyribonucleoside 5'-diphosphate + ATP = a 2'-deoxyribonucleoside 5'-triphosphate + ADP. The enzyme catalyses a ribonucleoside 5'-diphosphate + ATP = a ribonucleoside 5'-triphosphate + ADP. In terms of biological role, major role in the synthesis of nucleoside triphosphates other than ATP. The ATP gamma phosphate is transferred to the NDP beta phosphate via a ping-pong mechanism, using a phosphorylated active-site intermediate. In Bacillus cereus (strain ATCC 10987 / NRS 248), this protein is Nucleoside diphosphate kinase.